The following is a 93-amino-acid chain: Small ribosomal subunit protein uS19 (93 aa).

This sequence belongs to the universal ribosomal protein uS19 family.

Its function is as follows. Protein S19 forms a complex with S13 that binds strongly to the 16S ribosomal RNA. The chain is Small ribosomal subunit protein uS19 from Dehalococcoides mccartyi (strain ATCC BAA-2266 / KCTC 15142 / 195) (Dehalococcoides ethenogenes (strain 195)).